We begin with the raw amino-acid sequence, 348 residues long: Tocopherol O-methyltransferase, chloroplastic (348 aa).

The N-terminal 51 residues, 1–51 (MKATLAAPSSLTSLPYRTNSSFGSKSSLLFRSPSSSSSVSMTTTRGNVAVA), are a transit peptide targeting the chloroplast. Position 52 is an N-acetylalanine (Ala-52). The tract at residues 130–139 (VVDVGCGIGG) is SAM motif I. The segment at 193–201 (GKFDLVWSM) is SAM motif II. An SAM motif III region spans residues 220 to 229 (VAAPGGRIII).

This sequence belongs to the class I-like SAM-binding methyltransferase superfamily. gTMT family.

It localises to the plastid. The protein localises to the chloroplast. It catalyses the reaction gamma-tocopherol + S-adenosyl-L-methionine = (+)-alpha-tocopherol + S-adenosyl-L-homocysteine + H(+). The enzyme catalyses delta-tocotrienol + S-adenosyl-L-methionine = beta-tocotrienol + S-adenosyl-L-homocysteine + H(+). It carries out the reaction gamma-tocotrienol + S-adenosyl-L-methionine = alpha-tocotrienol + S-adenosyl-L-homocysteine + H(+). The catalysed reaction is delta-tocopherol + S-adenosyl-L-methionine = beta-tocopherol + S-adenosyl-L-homocysteine + H(+). Its pathway is cofactor biosynthesis; tocopherol biosynthesis. Involved in the synthesis of tocopherol (vitamin E). Methylates gamma- and delta-tocopherol to form beta- and alpha-tocopherol, respectively. The protein is Tocopherol O-methyltransferase, chloroplastic (VTE4) of Arabidopsis thaliana (Mouse-ear cress).